Consider the following 858-residue polypeptide: DNA mismatch repair protein MutS (858 aa).

603–610 (GPNMSGKS) provides a ligand contact to ATP.

The protein belongs to the DNA mismatch repair MutS family.

In terms of biological role, this protein is involved in the repair of mismatches in DNA. It is possible that it carries out the mismatch recognition step. This protein has a weak ATPase activity. This chain is DNA mismatch repair protein MutS, found in Streptococcus agalactiae serotype Ia (strain ATCC 27591 / A909 / CDC SS700).